We begin with the raw amino-acid sequence, 1249 residues long: Voltage-dependent calcium channel unc-36 (1249 aa).

The signal sequence occupies residues 1–19 (MRVVHLLVVLATYVSTTSS). The Extracellular segment spans residues 20–1228 (FNKESIKECA…SENERRPCST (1209 aa)). 11 N-linked (GlcNAc...) asparagine glycosylation sites follow: Asn-100, Asn-140, Asn-146, Asn-302, Asn-520, Asn-558, Asn-757, Asn-838, Asn-903, Asn-923, and Asn-1130. One can recognise a VWFA domain in the interval 250–479 (NVLIMLDMSG…EKIHHYIRRM (230 aa)). The helical transmembrane segment at 1229–1248 (SPTIVSIFQILFGVFLHFCI) threads the bilayer. Phe-1249 is a topological domain (cytoplasmic).

In terms of tissue distribution, decendants of the cells AB and AB.p (that give rise to nearly all non-pharyngeal neurons), decendants of P1 (that give rise to body muscle) and cell lineages that give rise to the adult and juvenile motor neurons. Expressed in body wall, vulval muscle and pharyngeal muscle.

Its subcellular location is the membrane. Its function is as follows. May act as an auxiliary subunit of the unc-2 voltage-gated calcium channel which appears to trigger calcium-activated signaling pathways that control the serotonin response. Inhibiting serotonin sensitivity of the vulval muscles results in egg laying defects. May act in both neurons and muscle cells to enhance motor activity as it is required for coordinated movement. Has a role in neural depolarization-induced calcium influx and pharyngeal pumping. Involved in restricting the expression of the putative olfactory receptor str-2 to only one of the two AWC neurons. In Caenorhabditis elegans, this protein is Voltage-dependent calcium channel unc-36 (unc-36).